Here is a 266-residue protein sequence, read N- to C-terminus: Small ribosomal subunit protein uS2 (266 aa).

Residues 229-254 (RTSDKEADTTTEEVAQEEVTDTKADE) form a disordered region. The span at 237-247 (TTTEEVAQEEV) shows a compositional bias: acidic residues.

The protein belongs to the universal ribosomal protein uS2 family.

The sequence is that of Small ribosomal subunit protein uS2 from Flavobacterium psychrophilum (strain ATCC 49511 / DSM 21280 / CIP 103535 / JIP02/86).